Here is a 614-residue protein sequence, read N- to C-terminus: Leucine-rich repeat and immunoglobulin-like domain-containing nogo receptor-interacting protein 1 (614 aa).

The first 35 residues, 1-35, serve as a signal peptide directing secretion; it reads MLAGGVRSMPSPLLACWQPILLLVLGSVLSGSATG. 2 cysteine pairs are disulfide-bonded: Cys36-Cys42 and Cys40-Cys51. The LRRNT domain maps to 36 to 65; sequence CPPRCECSAQDRAVLCHRKRFVAVPEGIPT. Over 36-555 the chain is Extracellular; the sequence is CPPRCECSAQ…FDIKTLIIAT (520 aa). LRR repeat units follow at residues 66–87, 90–111, 114–135, 138–159, 162–183, 186–207, 210–231, 258–279, 282–303, 306–327, and 330–351; these read ETRL…EFAS, HLEE…AFNN, NLRT…VFTG, NLTK…MFQD, NLKS…AFSG, SLEQ…ALSH, GLIV…SFKR, NLTS…AVRH, YLRF…MLHE, RLQE…AFRG, and YLRV…VFHS. An N-linked (GlcNAc...) asparagine glycan is attached at Asn138. Asn196 carries N-linked (GlcNAc...) asparagine glycosylation. N-linked (GlcNAc...) asparagine glycosylation is found at Asn258, Asn268, and Asn287. Residue Asn335 is glycosylated (N-linked (GlcNAc...) asparagine). The LRRCT domain occupies 363–417; the sequence is NPLACDCRLLWVFRRRWRLNFNRQQPTCATPEFVQGKEFKDFPDVLLPNYFTCRR. Cystine bridges form between Cys367/Cys390, Cys369/Cys415, and Cys440/Cys491. One can recognise an Ig-like C2-type domain in the interval 405–507; that stretch reads PDVLLPNYFT…GNDSMPAHLH (103 aa). 4 N-linked (GlcNAc...) asparagine glycosylation sites follow: Asn486, Asn499, Asn520, and Asn536. Residues 556–576 traverse the membrane as a helical segment; it reads TMGFISFLGVVLFCLVLLFLW. The Cytoplasmic segment spans residues 577 to 614; that stretch reads SRGKGNTKHNIEIEYVPRKSDAGISSADAPRKFNMKMI. Position 596 is a phosphoserine (Ser596).

In terms of assembly, homotetramer. Forms a ternary complex with RTN4R/NGFR and RTN4R/TNFRSF19. Interacts with NGRF, RTN4R and MYT1L. Post-translationally, N-glycosylated. Contains predominantly high-mannose glycans.

The protein localises to the cell membrane. In terms of biological role, functional component of the Nogo receptor signaling complex (RTN4R/NGFR) in RhoA activation responsible for some inhibition of axonal regeneration by myelin-associated factors. Is also an important negative regulator of oligodentrocyte differentiation and axonal myelination. Acts in conjunction with RTN4 and RTN4R in regulating neuronal precursor cell motility during cortical development. The polypeptide is Leucine-rich repeat and immunoglobulin-like domain-containing nogo receptor-interacting protein 1 (LINGO1) (Pongo abelii (Sumatran orangutan)).